Consider the following 484-residue polypeptide: MTQWEVVIGIETHAQLSTVSKIFSGASTAFGAEPNTQACAVDLALPGVLPVLNKKAVECAIRFGLAIGAEVAQKSVFARKNYFYPDLPKGYQISQMDLPVVVGGNITLQVGQGDKAYEKIVRLTRAHLEEDAGKSLHEDFHGKSGIDLNRAGTPLLEIVSEPDMRSSDEAVAYARALHALVRWIGICDGNMQEGSFRCDANVSVRPKGQAEFGTRREIKNLNSFRFMKEAIDFEVQWQINEIEEGRKIQQATVLFDPDTGETRMMRSKEDAHDYRYFPDPDLLPLMIPAEWIARVQGEMPELPVQRRERFAGDLGLSAYDASALTASQEIADYFEAVVAIAGKANAKPCANWVMVDLAARLNKDGKDIADSPVSAAQLAGLIQRIADSTISNNIAKKVFEALWNGEGATADEVIDKQGLKQITDTGAIEALVDEVLAANAANVAEFKAGKEKAFNALVGQVMKAAKGKANPQQVNDLLKQKLAG.

This sequence belongs to the GatB/GatE family. GatB subfamily. In terms of assembly, heterotrimer of A, B and C subunits.

The enzyme catalyses L-glutamyl-tRNA(Gln) + L-glutamine + ATP + H2O = L-glutaminyl-tRNA(Gln) + L-glutamate + ADP + phosphate + H(+). It catalyses the reaction L-aspartyl-tRNA(Asn) + L-glutamine + ATP + H2O = L-asparaginyl-tRNA(Asn) + L-glutamate + ADP + phosphate + 2 H(+). Allows the formation of correctly charged Asn-tRNA(Asn) or Gln-tRNA(Gln) through the transamidation of misacylated Asp-tRNA(Asn) or Glu-tRNA(Gln) in organisms which lack either or both of asparaginyl-tRNA or glutaminyl-tRNA synthetases. The reaction takes place in the presence of glutamine and ATP through an activated phospho-Asp-tRNA(Asn) or phospho-Glu-tRNA(Gln). This is Aspartyl/glutamyl-tRNA(Asn/Gln) amidotransferase subunit B from Dechloromonas aromatica (strain RCB).